A 290-amino-acid chain; its full sequence is 4-hydroxybenzoate octaprenyltransferase (290 aa).

8 consecutive transmembrane segments (helical) span residues 23-43 (IGTLLLLWPTLWALWLAGKGV), 46-66 (LSILVVFVVGVFLMRAAGCVV), 99-119 (LFVVLVLVSFGLVLTLNAMTI), 141-161 (LPQFVLGAAFGWGIPMAYAAV), 170-190 (WLLLLANICWTVAYDTLYAMV), 213-233 (LIVGLLQFATLLLMLWVGYLT), 234-254 (QMSGAFYWSLLLAGALFIHQQ), and 268-288 (AFMDNNYVGLVLFIGIALSYW).

The protein belongs to the UbiA prenyltransferase family. Requires Mg(2+) as cofactor.

It localises to the cell inner membrane. The catalysed reaction is all-trans-octaprenyl diphosphate + 4-hydroxybenzoate = 4-hydroxy-3-(all-trans-octaprenyl)benzoate + diphosphate. Its pathway is cofactor biosynthesis; ubiquinone biosynthesis. Its function is as follows. Catalyzes the prenylation of para-hydroxybenzoate (PHB) with an all-trans polyprenyl group. Mediates the second step in the final reaction sequence of ubiquinone-8 (UQ-8) biosynthesis, which is the condensation of the polyisoprenoid side chain with PHB, generating the first membrane-bound Q intermediate 3-octaprenyl-4-hydroxybenzoate. This chain is 4-hydroxybenzoate octaprenyltransferase, found in Serratia proteamaculans (strain 568).